We begin with the raw amino-acid sequence, 213 residues long: ATP phosphoribosyltransferase (213 aa).

Belongs to the ATP phosphoribosyltransferase family. Short subfamily. In terms of assembly, heteromultimer composed of HisG and HisZ subunits.

The protein localises to the cytoplasm. It catalyses the reaction 1-(5-phospho-beta-D-ribosyl)-ATP + diphosphate = 5-phospho-alpha-D-ribose 1-diphosphate + ATP. It functions in the pathway amino-acid biosynthesis; L-histidine biosynthesis; L-histidine from 5-phospho-alpha-D-ribose 1-diphosphate: step 1/9. In terms of biological role, catalyzes the condensation of ATP and 5-phosphoribose 1-diphosphate to form N'-(5'-phosphoribosyl)-ATP (PR-ATP). Has a crucial role in the pathway because the rate of histidine biosynthesis seems to be controlled primarily by regulation of HisG enzymatic activity. The polypeptide is ATP phosphoribosyltransferase (hisG) (Listeria monocytogenes serovar 1/2a (strain ATCC BAA-679 / EGD-e)).